The following is a 249-amino-acid chain: Type I iodothyronine deiodinase (249 aa).

Residues 1–12 (MGLPQPGLWLKR) are Extracellular-facing. A helical; Signal-anchor for type III membrane protein membrane pass occupies residues 13–33 (LWVLLEVAVHVVVGKVLLILF). Residues 34-249 (PDRVKRNILA…VRAVLEKLHS (216 aa)) lie on the Cytoplasmic side of the membrane. Residue U126 is part of the active site. A non-standard amino acid (selenocysteine) is located at residue U126.

The protein belongs to the iodothyronine deiodinase family. In terms of assembly, predominantly monomer. Can form homodimers but homodimerization is not essential for enzyme activity.

The protein resides in the cell membrane. It is found in the endoplasmic reticulum membrane. It localises to the basolateral cell membrane. It catalyses the reaction 3,3',5-triiodo-L-thyronine + iodide + A + H(+) = L-thyroxine + AH2. The enzyme catalyses 3,3',5'-triiodo-L-thyronine + iodide + A + H(+) = L-thyroxine + AH2. The catalysed reaction is 3,3'-diiodo-L-thyronine + iodide + A + H(+) = 3,3',5'-triiodo-L-thyronine + AH2. It carries out the reaction 3,3'-diiodo-L-thyronine + iodide + A + H(+) = 3,3',5-triiodo-L-thyronine + AH2. It catalyses the reaction 3'-iodo-L-thyronine + iodide + A + H(+) = 3',5'-diiodo-L-thyronine + AH2. The enzyme catalyses 3-iodo-L-thyronine + iodide + A + H(+) = 3,5-diiodo-L-thyronine + AH2. The catalysed reaction is 3-iodo-L-thyronine + iodide + A + H(+) = 3,3'-diiodo-L-thyronine + AH2. It carries out the reaction 3,3'-diiodothyronamine + iodide + A + H(+) = 3,3',5'-triiodothyronamine + AH2. It catalyses the reaction 3'-iodothyronamine + iodide + A + H(+) = 3',5'-diiodothyronamine + AH2. The enzyme catalyses 3-iodothyronamine + iodide + A + H(+) = 3,3'-diiodothyronamine + AH2. The catalysed reaction is 3,3'-diiodothyronamine + iodide + A + H(+) = 3,3',5-triiodothyronamine + AH2. It carries out the reaction 3-iodothyronamine + iodide + A + H(+) = 3,5-diiodothyronamine + AH2. It catalyses the reaction 3,3'-diiodo-L-thyronine sulfate + iodide + A + H(+) = 3,3',5'-triiodo-L-thyronine sulfate + AH2. The enzyme catalyses 3,3',5'-triiodo-L-thyronine sulfate + iodide + A + H(+) = L-thyroxine sulfate + AH2. The catalysed reaction is 3,3'-diiodo-L-thyronine sulfate + iodide + A + H(+) = 3,3',5-triiodo-L-thyronine sulfate + AH2. Its activity is regulated as follows. Deiodination of substrates 3,3',5'-triiodothyronine, 3,3',5'-triiodothyronamine and 3',5'- diiodothyronamine are inhibited by 6n-propyl-2-thiouracil (PTU). Its function is as follows. Plays a crucial role in the metabolism of thyroid hormones (TH) and has specific roles in TH activation and inactivation by deiodination. Catalyzes the deiodination of L-thyroxine (T4) to 3,5,3'-triiodothyronine (T3), 3,3',5'-triiodothyronine (rT3) to 3,3'-diiodothyronine (3,3'-T2) and 3',5'-diiodothyronine (3',5'-T2) to 3'-monoiodothyronine (3'-T1) via outer-ring deiodination (ORD). Catalyzes the deiodination of T4 to 3,3',5'-triiodothyronine (rT3) via inner-ring deiodination (IRD). Catalyzes the deiodination of T3 to 3,3'-T2, 3,5-diiodothyronine (3,5-T2) to 3- monoiodothyronine (3-T1) and 3,3'-T2 to 3-T1 via IRD. Catalyzes the phenolic ring deiodinations of 3,3',5'-triiodothyronamine and 3',5'-diiodothyronamine. Catalyzes the phenolic ring deiodination of 3,3'-diiodothyronamine and tyrosyl ring deiodinations of 3,5,3'-triiodothyronamine and 3,5-diiodothyronamine. Catalyzes the deiodination of L-thyroxine sulfate and 3,3',5-triiodo-L-thyronine sulfate via IRD and of 3,3',5'-triiodo-L-thyronine sulfate via ORD. In Homo sapiens (Human), this protein is Type I iodothyronine deiodinase (DIO1).